Consider the following 61-residue polypeptide: RICYNHLGTKPPTTECTQEDSCYKNIWRNITFDNIRRGCGCFTPRGDMPGPYCCESDKCNL.

Intrachain disulfides connect Cys3/Cys22, Cys16/Cys39, Cys41/Cys53, and Cys54/Cys59. The short motif at Arg45–Asp47 is the Cell attachment site element.

Belongs to the three-finger toxin family. Short-chain subfamily. Antiplatelet toxin sub-subfamily. In terms of tissue distribution, expressed by the venom gland.

It is found in the secreted. Functionally, inhibits ADP-induced platelet aggregation and inhibits the binding of purified platelet fibrinogen receptor alpha-IIb/beta-3 (ITGA2B/ITGB3) to immobilized fibrinogen. The protein is Toxin S5C1 of Dendroaspis jamesoni kaimosae (Eastern Jameson's mamba).